Here is a 338-residue protein sequence, read N- to C-terminus: 4-hydroxy-2-oxovalerate aldolase (338 aa).

A Pyruvate carboxyltransferase domain is found at 4–254; that stretch reads PRLTDTTLRD…NPGLDVLALM (251 aa). 12–13 provides a ligand contact to substrate; that stretch reads RD. Asp13 provides a ligand contact to Mn(2+). The active-site Proton acceptor is the His16. Residues Ser166 and His193 each contribute to the substrate site. Residues His193 and His195 each contribute to the Mn(2+) site. Substrate is bound at residue Tyr284.

The protein belongs to the 4-hydroxy-2-oxovalerate aldolase family.

The catalysed reaction is (S)-4-hydroxy-2-oxopentanoate = acetaldehyde + pyruvate. The polypeptide is 4-hydroxy-2-oxovalerate aldolase (Roseiflexus sp. (strain RS-1)).